The chain runs to 283 residues: Cyclin-C (283 aa).

Residues 46-144 enclose the Cyclin N-terminal domain; it reads NVIQALGEHL…VLECEFYLLE (99 aa). The segment at 252 to 283 is disordered; that stretch reads TILSKMPKPKPPPNSEGEQGPNGSQNSSYSQS. Residues 272–283 show a composition bias toward polar residues; it reads PNGSQNSSYSQS. The residue at position 275 (serine 275) is a Phosphoserine.

It belongs to the cyclin family. Cyclin C subfamily. Component of the Mediator complex, which is composed of MED1, MED4, MED6, MED7, MED8, MED9, MED10, MED11, MED12, MED13, MED13L, MED14, MED15, MED16, MED17, MED18, MED19, MED20, MED21, MED22, MED23, MED24, MED25, MED26, MED27, MED29, MED30, MED31, CCNC, CDK8 and CDC2L6/CDK11. The MED12, MED13, CCNC and CDK8 subunits form a distinct module termed the CDK8 module. Mediator containing the CDK8 module is less active than Mediator lacking this module in supporting transcriptional activation. Individual preparations of the Mediator complex lacking one or more distinct subunits have been variously termed ARC, CRSP, DRIP, PC2, SMCC and TRAP. The cylin/CDK pair formed by CCNC/CDK8 also associates with the large subunit of RNA polymerase II.

It is found in the nucleus. Its function is as follows. Component of the Mediator complex, a coactivator involved in regulated gene transcription of nearly all RNA polymerase II-dependent genes. Mediator functions as a bridge to convey information from gene-specific regulatory proteins to the basal RNA polymerase II transcription machinery. Mediator is recruited to promoters by direct interactions with regulatory proteins and serves as a scaffold for the assembly of a functional preinitiation complex with RNA polymerase II and the general transcription factors. Binds to and activates cyclin-dependent kinase CDK8 that phosphorylates the CTD (C-terminal domain) of the large subunit of RNA polymerase II (RNAp II), which may inhibit the formation of a transcription initiation complex. This chain is Cyclin-C (CCNC), found in Bos taurus (Bovine).